The primary structure comprises 252 residues: ELH type 2 (252 aa).

A signal peptide spans 1 to 19 (AISLLMCLILSALCASSES). 3 propeptides span residues 20 to 75 (AVVH…VNNE), 92 to 130 (PQEVSGLKPVMMSRASASADENSLFDLYNTDGAMYQREL), and 144 to 185 (AAGD…SGIA). Residues 145 to 161 (AGDEDKAEEHNPETESH) are compositionally biased toward basic and acidic residues. A disordered region spans residues 145–171 (AGDEDKAEEHNPETESHSRRKRSALTP). Lysine 222 is modified (lysine amide).

This sequence belongs to the molluscan ELH family. In terms of tissue distribution, bag cell neurons.

It is found in the secreted. Its function is as follows. ELH acts as a neurotransmitter locally, upon neurons of the abdominal ganglion and as a hormone by diffusing into the circulating hemolymph and modulating the activity of other organs. It specifically causes contraction of smooth muscle in the ovotestis and expulsion of the egg string. Functionally, alpha-BCP decreases the activity of a cluster of neurons in the left upper quadrant of the abdominal ganglion. Beta-BCP specifically excites 2 neurons, L1 and R1, in the abdominal ganglion. The protein is ELH type 2 (ELH2) of Aplysia parvula (Dwarf sea hare).